A 257-amino-acid polypeptide reads, in one-letter code: Chymotrypsin-like protease VLCTLP (257 aa).

Positions 1–18 (MVLIRVLANLLLLQLSYA) are cleaved as a signal peptide. A propeptide spanning residues 19-24 (QKSSEL) is cleaved from the precursor. The 224-residue stretch at 25-248 (VVGGDECNIN…YSDWIQSIIA (224 aa)) folds into the Peptidase S1 domain. 6 disulfide bridges follow: cysteine 31-cysteine 162, cysteine 49-cysteine 65, cysteine 97-cysteine 255, cysteine 141-cysteine 209, cysteine 173-cysteine 188, and cysteine 199-cysteine 224. Asparagine 44 is a glycosylation site (N-linked (GlcNAc...) asparagine). Catalysis depends on histidine 64, which acts as the Charge relay system. Asparagine 100 is a glycosylation site (N-linked (GlcNAc...) asparagine). Aspartate 109 (charge relay system) is an active-site residue. N-linked (GlcNAc...) asparagine glycosylation is found at asparagine 116 and asparagine 153. The Charge relay system role is filled by serine 203. A glycan (N-linked (GlcNAc...) asparagine) is linked at asparagine 250.

It belongs to the peptidase S1 family. Snake venom subfamily. In terms of assembly, monomer. Partial deglycosylation has not effect on enzyme activity. In terms of tissue distribution, expressed by the venom gland.

The protein localises to the secreted. Inhibited by PMSF. In terms of biological role, snake venom serine protease with tyrosine-specific chymotrypsin-like activity. Hydrolyzes the N-acetyl-L-tyrosine ethyl ester (ATEE). Has weak fibrinogenolytic activity. Weakly hydrolyzes azocasein, Aalpha-chain (FGA) and more slowly Bbeta-chain (FGB) of fibrinogen. Optimal substrates are angiotensins I and II (AGT). The polypeptide is Chymotrypsin-like protease VLCTLP (Macrovipera lebetinus (Levantine viper)).